Here is a 459-residue protein sequence, read N- to C-terminus: Elongation factor 1-alpha (459 aa).

A N,N,N-trimethylglycine modification is found at G2. N6,N6-dimethyllysine; alternate is present on K3. K3 bears the N6-methyllysine; alternate mark. The region spanning 5 to 239 (KSHINVVVIG…DAIDPPSRPT (235 aa)) is the tr-type G domain. Residues 14–21 (GHVDSGKS) form a G1 region. Position 14-21 (14-21 (GHVDSGKS)) interacts with GTP. K30 carries the post-translational modification N6-methyllysine. Positions 70–74 (GITID) are G2. K79 carries the post-translational modification N6,N6,N6-trimethyllysine. The segment at 91 to 94 (DAPG) is G3. Residues 91-95 (DAPGH) and 153-156 (NKMD) each bind GTP. The interval 153-156 (NKMD) is G4. Residues 192-194 (SGF) are G5. N6,N6-dimethyllysine; alternate is present on K315. K315 carries the post-translational modification N6-methyllysine; alternate. K389 is subject to N6-methyllysine.

It belongs to the TRAFAC class translation factor GTPase superfamily. Classic translation factor GTPase family. EF-Tu/EF-1A subfamily.

It is found in the cytoplasm. Functionally, this protein promotes the GTP-dependent binding of aminoacyl-tRNA to the A-site of ribosomes during protein biosynthesis. In Aureobasidium pullulans (Black yeast), this protein is Elongation factor 1-alpha (TEF1).